A 208-amino-acid polypeptide reads, in one-letter code: NADH-ubiquinone oxidoreductase chain 4 (208 aa).

6 helical membrane passes run Val-23 to Trp-43, Ser-60 to Ser-80, Lys-93 to Asn-113, Glu-114 to Thr-134, Leu-147 to Ile-167, and Pro-188 to Pro-208.

This sequence belongs to the complex I subunit 4 family. Core subunit of respiratory chain NADH dehydrogenase (Complex I) which is composed of 45 different subunits.

Its subcellular location is the mitochondrion inner membrane. It carries out the reaction a ubiquinone + NADH + 5 H(+)(in) = a ubiquinol + NAD(+) + 4 H(+)(out). Its function is as follows. Core subunit of the mitochondrial membrane respiratory chain NADH dehydrogenase (Complex I) which catalyzes electron transfer from NADH through the respiratory chain, using ubiquinone as an electron acceptor. Essential for the catalytic activity and assembly of complex I. The sequence is that of NADH-ubiquinone oxidoreductase chain 4 (MT-ND4) from Phodopus sungorus (Striped hairy-footed hamster).